Consider the following 551-residue polypeptide: L-lactate permease (551 aa).

12 helical membrane-spanning segments follow: residues 13–33, 37–57, 70–90, 131–151, 159–179, 194–214, 244–264, 366–386, 405–425, 438–458, 494–514, and 530–550; these read NIWL…FALI, LKGY…ALLF, VYGF…AVFV, GAAG…GLGF, LCLI…PILV, MVGR…MAIM, FIGP…CLTL, FDWF…SIVW, LALP…SNYS, TGHA…FLTG, VTGK…VGLV, and IFTC…TWMI.

Belongs to the lactate permease family.

The protein resides in the cell inner membrane. The catalysed reaction is (S)-lactate(in) + H(+)(in) = (S)-lactate(out) + H(+)(out). The enzyme catalyses (R)-lactate(in) + H(+)(in) = (R)-lactate(out) + H(+)(out). It catalyses the reaction glycolate(in) + H(+)(in) = glycolate(out) + H(+)(out). Its function is as follows. Uptake of L-lactate across the membrane. Can also transport D-lactate and glycolate. Seems to be driven by a proton motive force. This is L-lactate permease (lldP) from Escherichia coli O6:H1 (strain CFT073 / ATCC 700928 / UPEC).